We begin with the raw amino-acid sequence, 179 residues long: Apoptosis regulator Bcl-2 homolog (179 aa).

The short motif at E76 to A95 is the BH1 element. A BH2 motif is present at residues P126–S141.

This sequence belongs to the Bcl-2 family. Interacts with host BECN1 (via BH3 homology domain); this interaction allows the virus to inhibit BECN1, and thus autophagy. Interacts with host BID. Interacts with host BAX.

It localises to the host mitochondrion. It is found in the host endoplasmic reticulum. In terms of biological role, suppresses apoptosis in host cell to promote the viral replication. Has the ability to potentially bind to all the members of the proapoptotic Bcl-2 family. Inhibits autophagy by interacting with host Beclin 1 (BECN1). The polypeptide is Apoptosis regulator Bcl-2 homolog (African swine fever virus (isolate Pig/Kenya/KEN-50/1950) (ASFV)).